The sequence spans 449 residues: Ktr system potassium uptake protein D (449 aa).

10 consecutive transmembrane segments (helical) span residues 17 to 37 (LIAL…SLPA), 46 to 66 (TFID…LTVV), 75 to 95 (IGIF…MTLG), 133 to 153 (VLFL…TYFL), 194 to 214 (FVQF…PVLV), 235 to 255 (ITTI…FALE), 297 to 317 (LFFI…GGGI), 355 to 375 (LVVT…LTIT), 380 to 400 (LLEL…SLGI), and 411 to 431 (VIMI…YLIG).

Belongs to the TrkH potassium transport family. Ktr (TC 2.A.38.4) subfamily. In terms of assembly, homodimer. Part of the KtrCD complex formed by an octameric catalytic ring of KtrC and a membrane associated dimer of KtrD forming a potassium channel.

The protein localises to the cell membrane. Integral membrane subunit of the KtrCD potassium uptake transporter. The 2 major potassium transporter complexes KtrAB and KtrCD confer resistance to both suddenly imposed and prolonged osmotic stress. This chain is Ktr system potassium uptake protein D (ktrD), found in Bacillus subtilis (strain 168).